Consider the following 366-residue polypeptide: Mitogen-activated protein kinase 13 (366 aa).

In terms of domain architecture, Protein kinase spans 25 to 308 (YLAPAHVGSG…AAQALAHPFF (284 aa)). Residues 31–39 (VGSGAYGAV) and Lys-54 contribute to the ATP site. Asp-150 (proton acceptor) is an active-site residue. A Phosphothreonine; by MAP2K3, MAP2K4, MAP2K6 and MAP2K7 modification is found at Thr-180. The short motif at 180 to 182 (TGY) is the TXY element. Tyr-182 bears the Phosphotyrosine mark. A Phosphoserine modification is found at Ser-350.

The protein belongs to the protein kinase superfamily. CMGC Ser/Thr protein kinase family. MAP kinase subfamily. In terms of assembly, interacts with MAPK8IP2. It depends on Mg(2+) as a cofactor. Post-translationally, dually phosphorylated on Thr-180 and Tyr-182 by MAP2K3/MKK3, MAP2K4/MKK4, MAP2K6/MKK6 and MAP2K7/MKK7, which activates the enzyme. Dephosphorylated by dual specificity phosphatase DUSP1.

The catalysed reaction is L-seryl-[protein] + ATP = O-phospho-L-seryl-[protein] + ADP + H(+). It catalyses the reaction L-threonyl-[protein] + ATP = O-phospho-L-threonyl-[protein] + ADP + H(+). Activated by phosphorylation on threonine and tyrosine by dual specificity kinases, MAP2K3/MKK3, MAP2K6/MKK6, MAP2K4/MKK4 and MAP2K7/MKK7. Activation by ultraviolet radiation, hyperosmotic shock, anisomycin or by TNF-alpha is mediated by MAP2K3/MKK3. Inhibited by dual specificity phosphatase DUSP1. Serine/threonine kinase which acts as an essential component of the MAP kinase signal transduction pathway. MAPK13 is one of the four p38 MAPKs which play an important role in the cascades of cellular responses evoked by extracellular stimuli such as pro-inflammatory cytokines or physical stress leading to direct activation of transcription factors such as ELK1 and ATF2. Accordingly, p38 MAPKs phosphorylate a broad range of proteins and it has been estimated that they may have approximately 200 to 300 substrates each. MAPK13 is one of the less studied p38 MAPK isoforms. Some of the targets are downstream kinases such as MAPKAPK2, which are activated through phosphorylation and further phosphorylate additional targets. Plays a role in the regulation of protein translation by phosphorylating and inactivating EEF2K. Involved in cytoskeletal remodeling through phosphorylation of MAPT and STMN1. Mediates UV irradiation induced up-regulation of the gene expression of CXCL14. Plays an important role in the regulation of epidermal keratinocyte differentiation, apoptosis and skin tumor development. Phosphorylates the transcriptional activator MYB in response to stress which leads to rapid MYB degradation via a proteasome-dependent pathway. MAPK13 also phosphorylates and down-regulates PRKD1 during regulation of insulin secretion in pancreatic beta cells. The sequence is that of Mitogen-activated protein kinase 13 (Mapk13) from Mus musculus (Mouse).